The chain runs to 277 residues: Probable cytochrome c oxidase subunit 3 (277 aa).

The next 6 helical transmembrane spans lie at 20–40 (PWPI…VSFM), 45–65 (FNHY…YSWW), 88–108 (IGMA…FASF), 173–193 (CVTA…MQAY), 211–231 (FYLA…FLIV), and 255–275 (AWYW…VYIF).

It belongs to the cytochrome c oxidase subunit 3 family.

It localises to the cell membrane. It carries out the reaction 4 Fe(II)-[cytochrome c] + O2 + 8 H(+)(in) = 4 Fe(III)-[cytochrome c] + 2 H2O + 4 H(+)(out). The protein is Probable cytochrome c oxidase subunit 3 (ctaE) of Rickettsia bellii (strain RML369-C).